The following is a 579-amino-acid chain: CTP synthase 1 (579 aa).

Residues 305–559 form the Glutamine amidotransferase type-1 domain; the sequence is KIALVGKYTN…LGLVAASAGI (255 aa). Cys-404 functions as the For GATase activity in the catalytic mechanism. Residue Lys-422 forms a Glycyl lysine isopeptide (Lys-Gly) (interchain with G-Cter in ubiquitin) linkage. Catalysis depends on for GATase activity residues His-535 and Glu-537.

Belongs to the CTP synthase family. In terms of assembly, homodimer. Oligomerizes to a tetramer in the presence of its substrates UTP and ATP.

It catalyses the reaction UTP + L-glutamine + ATP + H2O = CTP + L-glutamate + ADP + phosphate + 2 H(+). It participates in pyrimidine metabolism; CTP biosynthesis via de novo pathway; CTP from UDP: step 2/2. Its activity is regulated as follows. Activated by GTP and inhibited by CTP. Catalyzes the ATP-dependent amination of UTP to CTP with either L-glutamine or ammonia as the source of nitrogen. This chain is CTP synthase 1 (URA7), found in Saccharomyces cerevisiae (strain ATCC 204508 / S288c) (Baker's yeast).